A 219-amino-acid chain; its full sequence is ATP phosphoribosyltransferase (219 aa).

This sequence belongs to the ATP phosphoribosyltransferase family. Short subfamily. As to quaternary structure, heteromultimer composed of HisG and HisZ subunits.

Its subcellular location is the cytoplasm. It catalyses the reaction 1-(5-phospho-beta-D-ribosyl)-ATP + diphosphate = 5-phospho-alpha-D-ribose 1-diphosphate + ATP. It participates in amino-acid biosynthesis; L-histidine biosynthesis; L-histidine from 5-phospho-alpha-D-ribose 1-diphosphate: step 1/9. Its function is as follows. Catalyzes the condensation of ATP and 5-phosphoribose 1-diphosphate to form N'-(5'-phosphoribosyl)-ATP (PR-ATP). Has a crucial role in the pathway because the rate of histidine biosynthesis seems to be controlled primarily by regulation of HisG enzymatic activity. The chain is ATP phosphoribosyltransferase from Clostridium kluyveri (strain NBRC 12016).